Consider the following 88-residue polypeptide: Small ribosomal subunit protein uS15 (88 aa).

The protein belongs to the universal ribosomal protein uS15 family. In terms of assembly, part of the 30S ribosomal subunit. Forms a bridge to the 50S subunit in the 70S ribosome, contacting the 23S rRNA.

In terms of biological role, one of the primary rRNA binding proteins, it binds directly to 16S rRNA where it helps nucleate assembly of the platform of the 30S subunit by binding and bridging several RNA helices of the 16S rRNA. Forms an intersubunit bridge (bridge B4) with the 23S rRNA of the 50S subunit in the ribosome. This chain is Small ribosomal subunit protein uS15, found in Pelobacter propionicus (strain DSM 2379 / NBRC 103807 / OttBd1).